We begin with the raw amino-acid sequence, 201 residues long: Recombination protein RecR (201 aa).

The C4-type zinc finger occupies 60-75; that stretch reads CSVCGNVDTIDPCSIC. Residues 83–178 form the Toprim domain; sequence ATIIVVEDIA…KVTRLAHGVP (96 aa).

It belongs to the RecR family.

Functionally, may play a role in DNA repair. It seems to be involved in an RecBC-independent recombinational process of DNA repair. It may act with RecF and RecO. The protein is Recombination protein RecR of Bartonella henselae (strain ATCC 49882 / DSM 28221 / CCUG 30454 / Houston 1) (Rochalimaea henselae).